The sequence spans 229 residues: Transmembrane emp24 domain-containing protein 5 (229 aa).

A signal peptide spans 1 to 27 (MGGRMWLPFPVLLLSALPAALLRGAAG). Residues 28 to 196 (FTPSLDSDFT…IQESNFDRVN (169 aa)) are Lumenal-facing. In terms of domain architecture, GOLD spans 45–126 (KECFYQPMPL…EKVIFFELIL (82 aa)). The chain crosses the membrane as a helical span at residues 197 to 217 (FWSVVNLMVMVVVSAIQVYTL). Residues 218-229 (KSLFEDKRKSRT) lie on the Cytoplasmic side of the membrane.

It belongs to the EMP24/GP25L family. As to quaternary structure, interacts with TMED9 and TMED10.

The protein resides in the endoplasmic reticulum membrane. The protein localises to the golgi apparatus. Its subcellular location is the cis-Golgi network membrane. It localises to the endoplasmic reticulum-Golgi intermediate compartment membrane. Potential role in vesicular protein trafficking, mainly in the early secretory pathway. Required for the maintenance of the Golgi apparatus; involved in protein exchange between Golgi stacks during assembly. Probably not required for COPI-vesicle-mediated retrograde transport. The protein is Transmembrane emp24 domain-containing protein 5 (Tmed5) of Mus musculus (Mouse).